The primary structure comprises 450 residues: Probable ECA polymerase (450 aa).

The next 11 helical transmembrane spans lie at 6–26 (FSGL…LTWF), 37–57 (VFFS…TSVL), 63–83 (VGVA…CFYA), 118–138 (VILM…NGFL), 155–175 (GVAL…VYFL), 181–201 (AWLF…MIVG), 207–227 (IIIA…ISLW), 228–248 (MLAA…LKRY), 341–361 (LVVM…GLII), 378–398 (YKAA…IVLA), and 410–430 (VFFI…YWLF).

This sequence belongs to the WzyE family. Probably part of a complex composed of WzxE, WzyE and WzzE.

It localises to the cell inner membrane. The protein operates within bacterial outer membrane biogenesis; enterobacterial common antigen biosynthesis. Its function is as follows. Probably involved in the polymerization of enterobacterial common antigen (ECA) trisaccharide repeat units. The protein is Probable ECA polymerase of Shigella sonnei (strain Ss046).